Reading from the N-terminus, the 1857-residue chain is Chitin synthase Y (1857 aa).

Residues Met-1 to Pro-22 form a disordered region. Positions Met-1–Glu-788 constitute a Myosin motor domain. Gly-102–Thr-109 is an ATP binding site. The interval Ser-601–Ser-653 is disordered. Residue Asn-634 is glycosylated (N-linked (GlcNAc...) asparagine). The actin-binding stretch occupies residues Leu-668 to Asp-692. Helical transmembrane passes span Trp-898–Gly-918 and Leu-937–Val-957. One can recognise a Cytochrome b5 heme-binding domain in the interval Gln-961–Phe-1020. Residues Asn-1047 and Asn-1072 are each glycosylated (N-linked (GlcNAc...) asparagine). The chain crosses the membrane as a helical span at residues Phe-1209 to Leu-1229. Asn-1572 carries N-linked (GlcNAc...) asparagine glycosylation. 3 consecutive transmembrane segments (helical) span residues Leu-1603–Leu-1623, Ile-1630–Ile-1650, and Met-1657–Phe-1677. In terms of domain architecture, DEK-C spans Leu-1799–Ser-1854.

In the N-terminal section; belongs to the TRAFAC class myosin-kinesin ATPase superfamily. Myosin family. The protein in the C-terminal section; belongs to the chitin synthase family. Class V subfamily.

It is found in the cell membrane. The protein localises to the cell septum. The protein resides in the cell tip. The catalysed reaction is [(1-&gt;4)-N-acetyl-beta-D-glucosaminyl](n) + UDP-N-acetyl-alpha-D-glucosamine = [(1-&gt;4)-N-acetyl-beta-D-glucosaminyl](n+1) + UDP + H(+). Polymerizes chitin, a structural polymer of the cell wall and septum, by transferring the sugar moiety of UDP-GlcNAc to the non-reducing end of the growing chitin polymer. Specifically involved in hyphal elongation and new cell wall formation. This chain is Chitin synthase Y, found in Aspergillus oryzae (strain ATCC 42149 / RIB 40) (Yellow koji mold).